The primary structure comprises 750 residues: Putative tyrosine-protein kinase EpsB (750 aa).

Topologically, residues 1–31 are cytoplasmic; the sequence is MTQNLPQPPAVNAPENELDLVRYLDVLVANR. Residues 32–52 form a helical membrane-spanning segment; sequence WLIAGIAAAVMLLGAAYAFLA. Topologically, residues 53-444 are periplasmic; it reads RPVYEADIMV…VPEEPVKPKK (392 aa). Residues 445 to 465 traverse the membrane as a helical segment; it reads LTVTPLAGVLGVVLGVMAAFV. Residues 466-750 lie on the Cytoplasmic side of the membrane; the sequence is RNALFGGITD…NSKPPEAESA (285 aa).

The protein belongs to the etk/wzc family.

It is found in the cell inner membrane. It carries out the reaction L-tyrosyl-[protein] + ATP = O-phospho-L-tyrosyl-[protein] + ADP + H(+). Functionally, probably involved in polymerization and/or export of exopolysaccharide EPS I which functions as a virulence factor. May be involved in an ATP-dependent process in the pathway for EPS I production, possibly export of the trimeric repeat units across the inner membrane or their polymerization. The polypeptide is Putative tyrosine-protein kinase EpsB (epsB) (Ralstonia solanacearum (Pseudomonas solanacearum)).